A 73-amino-acid polypeptide reads, in one-letter code: uncharacterized protein (73 aa).

An HTH deoR-type domain is found at 8–63 (MLTRIKSVYMFIQEKGLVTTQELVDEFGITPRTIQRDLNVLAYNDLVHSPSRGKWE). The H-T-H motif DNA-binding region spans 25 to 44 (VTTQELVDEFGITPRTIQRD).

This is an uncharacterized protein from Bacillus subtilis (strain 168).